Consider the following 268-residue polypeptide: 4-hydroxy-tetrahydrodipicolinate reductase (268 aa).

Residues 8–13 and Glu-34 each bind NAD(+); that span reads GGGGKM. NADP(+) is bound at residue Lys-35. Residues 98–100 and 122–125 contribute to the NAD(+) site; these read GST and APNM. The active-site Proton donor/acceptor is the His-155. Residue His-156 coordinates (S)-2,3,4,5-tetrahydrodipicolinate. The active-site Proton donor is the Lys-159. 165–166 lines the (S)-2,3,4,5-tetrahydrodipicolinate pocket; sequence GT.

This sequence belongs to the DapB family.

The protein localises to the cytoplasm. It carries out the reaction (S)-2,3,4,5-tetrahydrodipicolinate + NAD(+) + H2O = (2S,4S)-4-hydroxy-2,3,4,5-tetrahydrodipicolinate + NADH + H(+). It catalyses the reaction (S)-2,3,4,5-tetrahydrodipicolinate + NADP(+) + H2O = (2S,4S)-4-hydroxy-2,3,4,5-tetrahydrodipicolinate + NADPH + H(+). Its pathway is amino-acid biosynthesis; L-lysine biosynthesis via DAP pathway; (S)-tetrahydrodipicolinate from L-aspartate: step 4/4. Its function is as follows. Catalyzes the conversion of 4-hydroxy-tetrahydrodipicolinate (HTPA) to tetrahydrodipicolinate. The sequence is that of 4-hydroxy-tetrahydrodipicolinate reductase from Syntrophus aciditrophicus (strain SB).